The primary structure comprises 727 residues: Calpain-like protease 1 (727 aa).

Residues 70 to 317 (SRFYPPIPIS…FKQLYLNWNQ (248 aa)) enclose the Calpain catalytic domain. Catalysis depends on residues cysteine 128, histidine 271, and asparagine 296.

Belongs to the peptidase C2 family. PalB/RIM13 subfamily. In terms of assembly, interacts with SNF7, which may act together with RIM20 as a scaffold to recruit RIM13 to its substrate RIM101.

Its function is as follows. Required for the proteolytic cleavage of the transcriptional repressor RIM101 in response to alkaline ambient pH, which is necessary for sporulation and invasive growth. Probably the protease that cleaves RIM101. The polypeptide is Calpain-like protease 1 (RIM13) (Saccharomyces cerevisiae (strain ATCC 204508 / S288c) (Baker's yeast)).